The chain runs to 302 residues: uncharacterized protein (302 aa).

The S4 RNA-binding domain maps to 13-89 (QTLFKFLKKT…VNLDIVYEDN (77 aa)). Asp141 is a catalytic residue.

Belongs to the pseudouridine synthase RluA family.

The enzyme catalyses a uridine in RNA = a pseudouridine in RNA. This is an uncharacterized protein from Mycoplasma capricolum subsp. capricolum (strain California kid / ATCC 27343 / NCTC 10154).